A 102-amino-acid polypeptide reads, in one-letter code: Urease subunit beta (102 aa).

The protein belongs to the urease beta subunit family. Heterotrimer of UreA (gamma), UreB (beta) and UreC (alpha) subunits. Three heterotrimers associate to form the active enzyme.

It localises to the cytoplasm. It catalyses the reaction urea + 2 H2O + H(+) = hydrogencarbonate + 2 NH4(+). It functions in the pathway nitrogen metabolism; urea degradation; CO(2) and NH(3) from urea (urease route): step 1/1. This is Urease subunit beta from Acinetobacter baumannii (strain AB307-0294).